A 338-amino-acid chain; its full sequence is Clathrin light chain 1 (338 aa).

The tract at residues 1-111 (MATFDDGDFP…NEMREEGFQR (111 aa)) is disordered. Polar residues-rich tracts occupy residues 29–47 (SEAQQPPTQHQSGGFSSFN) and 61–73 (SSPNHDFSSPFES). Residues 102-111 (NEMREEGFQR) are compositionally biased toward basic and acidic residues. The involved in binding clathrin heavy chain stretch occupies residues 102-163 (NEMREEGFQR…TIETNKTDNR (62 aa)). Residues 122–142 (LEEKEKKEKEMRNQIITEAED) adopt a coiled-coil conformation. Positions 192-338 (IPREVPNIEK…VTEAEGTKAE (147 aa)) are disordered. Over residues 197–212 (PNIEKKRGKKDPDKKP) the composition is skewed to basic and acidic residues. Over residues 241–253 (NPPPHMMPPPPPA) the composition is skewed to pro residues. Over residues 254-304 (KDAKDGKDAKDGKDAKTGKDGKDAKGGKDAKDLKDGKPADPKVTEEKRPSP) the composition is skewed to basic and acidic residues.

Belongs to the clathrin light chain family. As to quaternary structure, clathrin coats are formed from molecules containing 3 heavy chains and 3 light chains.

The protein resides in the cytoplasmic vesicle membrane. The protein localises to the membrane. It localises to the coated pit. Clathrin is the major protein of the polyhedral coat of coated pits and vesicles. The protein is Clathrin light chain 1 of Arabidopsis thaliana (Mouse-ear cress).